Here is a 212-residue protein sequence, read N- to C-terminus: Small ribosomal subunit protein uS5 (212 aa).

The region spanning 48-111 is the S5 DRBM domain; the sequence is LDDEVLDINM…EVAKLNIIDV (64 aa).

Belongs to the universal ribosomal protein uS5 family. Part of the 30S ribosomal subunit. Contacts protein S4.

In terms of biological role, with S4 and S12 plays an important role in translational accuracy. The polypeptide is Small ribosomal subunit protein uS5 (Halobacterium salinarum (strain ATCC 700922 / JCM 11081 / NRC-1) (Halobacterium halobium)).